The chain runs to 320 residues: Cytochrome f (320 aa).

An N-terminal signal peptide occupies residues 1–35; the sequence is MQNRNTFSWVKEQMTRFISVSIMIYVITRTSISNA. The heme site is built by tyrosine 36, cysteine 56, cysteine 59, and histidine 60. A helical transmembrane segment spans residues 286–306; it reads VQGLLFFLASVILAQIFLVLK.

It belongs to the cytochrome f family. The 4 large subunits of the cytochrome b6-f complex are cytochrome b6, subunit IV (17 kDa polypeptide, petD), cytochrome f and the Rieske protein, while the 4 small subunits are PetG, PetL, PetM and PetN. The complex functions as a dimer. Requires heme as cofactor.

It is found in the plastid. The protein resides in the chloroplast thylakoid membrane. Its function is as follows. Component of the cytochrome b6-f complex, which mediates electron transfer between photosystem II (PSII) and photosystem I (PSI), cyclic electron flow around PSI, and state transitions. This is Cytochrome f from Drimys granadensis.